The chain runs to 132 residues: Small ribosomal subunit protein uS8 (132 aa).

The protein belongs to the universal ribosomal protein uS8 family. In terms of assembly, part of the 30S ribosomal subunit. Contacts proteins S5 and S12.

One of the primary rRNA binding proteins, it binds directly to 16S rRNA central domain where it helps coordinate assembly of the platform of the 30S subunit. This is Small ribosomal subunit protein uS8 from Granulibacter bethesdensis (strain ATCC BAA-1260 / CGDNIH1).